We begin with the raw amino-acid sequence, 422 residues long: Serine hydroxymethyltransferase 2 (422 aa).

(6S)-5,6,7,8-tetrahydrofolate contacts are provided by residues Leu-121 and 125-127 (GHL). Lys-230 is subject to N6-(pyridoxal phosphate)lysine.

Belongs to the SHMT family. Homodimer. Requires pyridoxal 5'-phosphate as cofactor.

Its subcellular location is the cytoplasm. It catalyses the reaction (6R)-5,10-methylene-5,6,7,8-tetrahydrofolate + glycine + H2O = (6S)-5,6,7,8-tetrahydrofolate + L-serine. It functions in the pathway one-carbon metabolism; tetrahydrofolate interconversion. Its pathway is amino-acid biosynthesis; glycine biosynthesis; glycine from L-serine: step 1/1. Catalyzes the reversible interconversion of serine and glycine with tetrahydrofolate (THF) serving as the one-carbon carrier. This reaction serves as the major source of one-carbon groups required for the biosynthesis of purines, thymidylate, methionine, and other important biomolecules. Also exhibits THF-independent aldolase activity toward beta-hydroxyamino acids, producing glycine and aldehydes, via a retro-aldol mechanism. The polypeptide is Serine hydroxymethyltransferase 2 (Agrobacterium fabrum (strain C58 / ATCC 33970) (Agrobacterium tumefaciens (strain C58))).